Reading from the N-terminus, the 231-residue chain is Urease accessory protein UreE (231 aa).

The interval 185–231 (VASPLDEPHGSGLHIHGIHSHEEGHSHGDHDHDHSHSHGDHDHDHKH) is disordered. The segment covering 203–231 (HSHEEGHSHGDHDHDHSHSHGDHDHDHKH) has biased composition (basic and acidic residues).

Belongs to the UreE family.

It is found in the cytoplasm. Involved in urease metallocenter assembly. Binds nickel. Probably functions as a nickel donor during metallocenter assembly. The sequence is that of Urease accessory protein UreE from Yersinia pestis bv. Antiqua (strain Antiqua).